A 130-amino-acid polypeptide reads, in one-letter code: Small ribosomal subunit protein uS9 (130 aa).

The protein belongs to the universal ribosomal protein uS9 family.

The polypeptide is Small ribosomal subunit protein uS9 (Shewanella loihica (strain ATCC BAA-1088 / PV-4)).